The sequence spans 317 residues: tRNA-cytidine(32) 2-sulfurtransferase (317 aa).

Residues 1–29 (MNTANNTLPTAADWAGEDGAPDAADTRKI) form a disordered region. A PP-loop motif motif is present at residues 65–70 (SGGKDS). 3 residues coordinate [4Fe-4S] cluster: Cys140, Cys143, and Cys231.

This sequence belongs to the TtcA family. As to quaternary structure, homodimer. The cofactor is Mg(2+). It depends on [4Fe-4S] cluster as a cofactor.

It localises to the cytoplasm. The enzyme catalyses cytidine(32) in tRNA + S-sulfanyl-L-cysteinyl-[cysteine desulfurase] + AH2 + ATP = 2-thiocytidine(32) in tRNA + L-cysteinyl-[cysteine desulfurase] + A + AMP + diphosphate + H(+). The protein operates within tRNA modification. Catalyzes the ATP-dependent 2-thiolation of cytidine in position 32 of tRNA, to form 2-thiocytidine (s(2)C32). The sulfur atoms are provided by the cysteine/cysteine desulfurase (IscS) system. This Acidovorax ebreus (strain TPSY) (Diaphorobacter sp. (strain TPSY)) protein is tRNA-cytidine(32) 2-sulfurtransferase.